Here is a 167-residue protein sequence, read N- to C-terminus: N-alpha-acetyltransferase (167 aa).

The region spanning 12–167 is the N-acetyltransferase domain; that stretch reads FTLRNARMDD…EDAYLMARPL (156 aa). Residue tyrosine 37 coordinates substrate. A Zn(2+)-binding site is contributed by histidine 88. Acetyl-CoA is bound by residues 92–94 and 100–105; these read IAV and RKGIAT. Glutamate 127 contributes to the Zn(2+) binding site. Residues asparagine 132 and 139–141 contribute to the acetyl-CoA site; that span reads YEK. Position 154 (tyrosine 154) interacts with substrate.

Belongs to the acetyltransferase family. ARD1 subfamily. Homodimer.

The protein resides in the cytoplasm. It carries out the reaction N-terminal L-alanyl-[protein] + acetyl-CoA = N-terminal N(alpha)-acetyl-L-alanyl-[protein] + CoA + H(+). The catalysed reaction is N-terminal L-seryl-[protein] + acetyl-CoA = N-terminal N(alpha)-acetyl-L-seryl-[protein] + CoA + H(+). It catalyses the reaction N-terminal L-methionyl-L-leucyl-[protein] + acetyl-CoA = N-terminal N(alpha)-acetyl-L-methionyl-L-leucyl-[protein] + CoA + H(+). The enzyme catalyses N-terminal L-methionyl-L-glutamyl-[protein] + acetyl-CoA = N-terminal N(alpha)-acetyl-L-methionyl-L-glutamyl-[protein] + CoA + H(+). Displays alpha (N-terminal) acetyltransferase activity. Catalyzes the covalent attachment of an acetyl moiety from acetyl-CoA to the free alpha-amino group at the N-terminus of a protein. NAT is able to acetylate the alpha-amino group of methionine, alanine and serine N-terminal residue substrates, however it has a preference for Ser-N-terminal substrates. In Saccharolobus solfataricus (strain ATCC 35092 / DSM 1617 / JCM 11322 / P2) (Sulfolobus solfataricus), this protein is N-alpha-acetyltransferase.